Here is a 234-residue protein sequence, read N- to C-terminus: Glucosamine-6-phosphate deaminase (234 aa).

The active-site Proton acceptor; for enolization step is the Asp62. Asn128 acts as the For ring-opening step in catalysis. Catalysis depends on His130, which acts as the Proton acceptor; for ring-opening step. The For ring-opening step role is filled by Glu135.

The protein belongs to the glucosamine/galactosamine-6-phosphate isomerase family. NagB subfamily.

It carries out the reaction alpha-D-glucosamine 6-phosphate + H2O = beta-D-fructose 6-phosphate + NH4(+). The protein operates within amino-sugar metabolism; N-acetylneuraminate degradation; D-fructose 6-phosphate from N-acetylneuraminate: step 5/5. In terms of biological role, catalyzes the reversible isomerization-deamination of glucosamine 6-phosphate (GlcN6P) to form fructose 6-phosphate (Fru6P) and ammonium ion. The chain is Glucosamine-6-phosphate deaminase from Streptococcus suis (strain 98HAH33).